Consider the following 246-residue polypeptide: Probable transcriptional regulatory protein CA_C2295 (246 aa).

The protein belongs to the TACO1 family.

The protein localises to the cytoplasm. The chain is Probable transcriptional regulatory protein CA_C2295 from Clostridium acetobutylicum (strain ATCC 824 / DSM 792 / JCM 1419 / IAM 19013 / LMG 5710 / NBRC 13948 / NRRL B-527 / VKM B-1787 / 2291 / W).